Consider the following 899-residue polypeptide: Inositol 1,4,5-triphosphate receptor associated 1 (899 aa).

Disordered stretches follow at residues 32–110, 164–286, 324–391, and 463–486; these read PGTH…HRHL, RRGR…PLQH, KTAR…EEPG, and AAEQ…SKSG. Positions 100 to 110 are enriched in basic residues; the sequence is SPHRRLSHRHL. S106 bears the Phosphoserine mark. The interval 140–172 is interaction with PRKG1; it reads SEEDKKKNLALLEEAKLVSERFLTRRGRKSRSS. Residues 171-180 are compositionally biased toward polar residues; the sequence is SSLGDSPSAV. Low complexity predominate over residues 181 to 203; the sequence is SPNLSSGASPASSRSCSLTISTS. Over residues 266–281 the composition is skewed to basic and acidic residues; that stretch reads TVEKTKELTVEQKENF. The segment covering 333 to 351 has biased composition (polar residues); that stretch reads PRTTAQGSGGTVSPHSLGQ. A Phosphoserine modification is found at S382. The interaction with ITPR1 stretch occupies residues 521 to 567; that stretch reads NVFVQLSLAFRNDSYTLESRINQAERERNLTEENTEKELENFKASIT. The stretch at 534–632 forms a coiled coil; sequence SYTLESRINQ…MQYVENLKRT (99 aa). Phosphoserine occurs at positions 670 and 683. Disordered regions lie at residues 695–722 and 757–818; these read LPGQ…SSIS and TSQE…DQGS. A compositionally biased stretch (low complexity) spans 699–715; the sequence is APSSSPMPSLPALSESS. Basic and acidic residues-rich tracts occupy residues 759-770 and 777-787; these read QETKAKAEEEAY and GVKKTEELQDL. A compositionally biased stretch (acidic residues) spans 788–814; the sequence is KEEEEEEQKTESPEEPEEVEETQEDEK. The chain crosses the membrane as a helical span at residues 839 to 859; that stretch reads WQVIWMMAAVMLVLSVVLGLY. The interval 867–899 is disordered; sequence EEADGPPGRSTCSAAQRDSWWSSGLQQELPAEQ. Residues 876-892 are compositionally biased toward polar residues; that stretch reads STCSAAQRDSWWSSGLQ.

In terms of assembly, part of cGMP kinase signaling complex at least composed of ACTA2/alpha-actin, CNN1/calponin H1, PLN/phospholamban, PRKG1 and ITPR1. Interacts with PRKG1/cGKI-beta and ITPR1/IP3R type I. Interacts with HCN4; regulates HCN4 channel activity. Phosphorylated by PRKG1/cGKI. In terms of tissue distribution, highly expressed in smooth muscle such as aorta, colon and uterus. Detected in the brain, in the thalamus, in the hippocampus and myenteric plexus. Highly expressed in megakaryocytes. Down-regulated during macrophage differentiation.

It localises to the membrane. The protein localises to the cytoplasm. It is found in the perinuclear region. The protein resides in the sarcoplasmic reticulum. Plays a role as NO/PRKG1-dependent regulator of IP3-induced calcium release; its phosphorylation by PRKG1 inhibits bradykinin and IP3-induced calcium release from intracellular stores. Recruits PRKG1 to the endoplasmic reticulum and may mediate the assembly of PRKG1 and ITPR1 in a macrocomplex. Involved in PRKG1 signaling cascade leading to inhibition of platelet activation and aggregation. Also mediates NO-dependent inhibition of calcium signaling in gastrointestinal smooth muscle contributing to NO-dependent relaxation. Plays a role in the regulation of cellular excitability by regulating the hyperpolarization-activated cyclic nucleotide-gated HCN4 channel activity. In Mus musculus (Mouse), this protein is Inositol 1,4,5-triphosphate receptor associated 1 (Irag1).